We begin with the raw amino-acid sequence, 839 residues long: MSRFFVAGYNSDSSSEEEDLLSSDEELLSSSSEGEQETSDDDSLDFDDQSDSDSSDSDSDGRPSGPAYFLKKDFMKGGAGGDSDSDSEDEGRRVVKSAKDKLLDDMNESIEAINVARRSDTWTTVVSEFDKLGRLLVRAGQQSVSTPNAYIRCLADLEDYITATSENEKTEKSLNAAEARAFNMAKQRVRKQIKEYQAQYDLYRENPELFEREESVDIAAPSRSDVPVEDTTGRVLSPVFTILKQIAETRGKKNIDKYEQIKTLEDLLNDNLAKGSVFELISIYQMLLSIRFDASANQNFMPIEQWKNNEADLTSLIGLLESNKDTYQLSELGSTTDDIDIEPVANESGVKAIFGSITSLIDRLDDEFTRSLQNTDPHSIEYVQRLKDETTIYQLIVRGQSYIESITPAEVQQSVEQLSRVVLRRLEHIYYKPDQLIKANEAEAWKGISHESVIVSKDSTPAELIEGLSSFLTKHKNPVYAKHALLFSVYYYAVNNNYNRAKELFLDSQIFNKIHHADSSLQVQYNRAIVQLGLSAFRNGAVEESHKVLNEIVNSQRSKELLGQGFNSKYPNQATTVEKAKLLPFHQHINLELLECVYSTCSLLIEIPALAAATNSKDSRRKATTKSFKSKLEFHDRQFFTGPPESIKDHIVHASIALSKGDWAKAYQLLSSIKIWKLFPDNDDLLAMMKNQLQVEGLRTYIFSYKSIFSKLSLGKLSQIFELEADKVESIVQKMIETNEIGGTLDESKAFIQFASTEPQRSRLQELAIVMNEKVGLLTEKNEKTSSNGYGKKQPQQQQQQQQQQQQQQQQQKDLLQEDNSRFRYANVNTNNDEFQTTA.

Residues 1–93 (MSRFFVAGYN…DSDSEDEGRR (93 aa)) form a disordered region. Composition is skewed to acidic residues over residues 14-27 (SSEEEDLLSSDEEL) and 34-58 (GEQETSDDDSLDFDDQSDSDSSDSD). The 175-residue stretch at 585–759 (FHQHINLELL…AFIQFASTEP (175 aa)) folds into the PCI domain. Residues 783–839 (EKTSSNGYGKKQPQQQQQQQQQQQQQQQQQKDLLQEDNSRFRYANVNTNNDEFQTTA) form a disordered region. Residues 794–812 (QPQQQQQQQQQQQQQQQQQ) are compositionally biased toward low complexity. Polar residues predominate over residues 827-839 (NVNTNNDEFQTTA).

It belongs to the eIF-3 subunit C family. As to quaternary structure, component of the eukaryotic translation initiation factor 3 (eIF-3) complex.

Its subcellular location is the cytoplasm. In terms of biological role, component of the eukaryotic translation initiation factor 3 (eIF-3) complex, which is involved in protein synthesis of a specialized repertoire of mRNAs and, together with other initiation factors, stimulates binding of mRNA and methionyl-tRNAi to the 40S ribosome. The eIF-3 complex specifically targets and initiates translation of a subset of mRNAs involved in cell proliferation. The sequence is that of Eukaryotic translation initiation factor 3 subunit C from Scheffersomyces stipitis (strain ATCC 58785 / CBS 6054 / NBRC 10063 / NRRL Y-11545) (Yeast).